The sequence spans 270 residues: NAD kinase (270 aa).

Asp45 serves as the catalytic Proton acceptor. NAD(+) contacts are provided by residues 45-46, 121-122, Arg147, Asp149, 160-165, and Ala184; these read DG, NE, and TAYNKS.

This sequence belongs to the NAD kinase family. A divalent metal cation is required as a cofactor.

It localises to the cytoplasm. It catalyses the reaction NAD(+) + ATP = ADP + NADP(+) + H(+). Involved in the regulation of the intracellular balance of NAD and NADP, and is a key enzyme in the biosynthesis of NADP. Catalyzes specifically the phosphorylation on 2'-hydroxyl of the adenosine moiety of NAD to yield NADP. In Limosilactobacillus reuteri subsp. reuteri (strain JCM 1112) (Lactobacillus reuteri), this protein is NAD kinase.